The chain runs to 353 residues: Holliday junction branch migration complex subunit RuvB (353 aa).

The segment at 4-185 (ADRLITATGG…FGIVQRLEFY (182 aa)) is large ATPase domain (RuvB-L). ATP-binding positions include Ile-24, Arg-25, Gly-66, Lys-69, Thr-70, Thr-71, 132 to 134 (EDF), Arg-175, Tyr-185, and Arg-222. Thr-70 contacts Mg(2+). Residues 186–256 (NIADLSTIVS…TADKALNLLD (71 aa)) are small ATPAse domain (RuvB-S). The segment at 259–353 (EHGFDHQDRR…DDFGDEPVDL (95 aa)) is head domain (RuvB-H). 3 residues coordinate DNA: Arg-295, Arg-314, and Arg-319.

The protein belongs to the RuvB family. As to quaternary structure, homohexamer. Forms an RuvA(8)-RuvB(12)-Holliday junction (HJ) complex. HJ DNA is sandwiched between 2 RuvA tetramers; dsDNA enters through RuvA and exits via RuvB. An RuvB hexamer assembles on each DNA strand where it exits the tetramer. Each RuvB hexamer is contacted by two RuvA subunits (via domain III) on 2 adjacent RuvB subunits; this complex drives branch migration. In the full resolvosome a probable DNA-RuvA(4)-RuvB(12)-RuvC(2) complex forms which resolves the HJ.

The protein resides in the cytoplasm. The catalysed reaction is ATP + H2O = ADP + phosphate + H(+). Its function is as follows. The RuvA-RuvB-RuvC complex processes Holliday junction (HJ) DNA during genetic recombination and DNA repair, while the RuvA-RuvB complex plays an important role in the rescue of blocked DNA replication forks via replication fork reversal (RFR). RuvA specifically binds to HJ cruciform DNA, conferring on it an open structure. The RuvB hexamer acts as an ATP-dependent pump, pulling dsDNA into and through the RuvAB complex. RuvB forms 2 homohexamers on either side of HJ DNA bound by 1 or 2 RuvA tetramers; 4 subunits per hexamer contact DNA at a time. Coordinated motions by a converter formed by DNA-disengaged RuvB subunits stimulates ATP hydrolysis and nucleotide exchange. Immobilization of the converter enables RuvB to convert the ATP-contained energy into a lever motion, pulling 2 nucleotides of DNA out of the RuvA tetramer per ATP hydrolyzed, thus driving DNA branch migration. The RuvB motors rotate together with the DNA substrate, which together with the progressing nucleotide cycle form the mechanistic basis for DNA recombination by continuous HJ branch migration. Branch migration allows RuvC to scan DNA until it finds its consensus sequence, where it cleaves and resolves cruciform DNA. In Pseudomonas syringae pv. syringae (strain B728a), this protein is Holliday junction branch migration complex subunit RuvB.